The chain runs to 536 residues: Protein GvpD1 (536 aa).

Position 39–46 (39–46 (GAPGTGKT)) interacts with ATP. Positions 352 to 413 (GPSDSADRYD…SDQPHPIDED (62 aa)) are disordered. Residues 363–372 (PDSTESFSEM) are compositionally biased toward polar residues. A compositionally biased stretch (low complexity) spans 373–385 (ATTTPPDDAPTAT). Basic and acidic residues predominate over residues 386–396 (HETDGADDGSR).

Belongs to the gas vesicle GvpD family. Interacts with GvpE.

It is found in the cytoplasm. In terms of biological role, causes a decrease in the amount of GvpE protein. The 5'-region of its promoter or mRNA has a repressive function on downstream genes. Gas vesicles are hollow, gas filled proteinaceous nanostructures found in several microbial planktonic microorganisms. They allow positioning of halobacteria at the optimal depth for growth in the poorly aerated, shallow brine pools of their habitat. Expression of a 9.5 kb p-vac DNA fragment containing 2 divergently transcribed regions (gvpD-gvpE-gvpF-gvpG-gvpH-gvpI-gvpJ-gvpK-gvpL-gvpM and gvpA-gvpC-gvpN-gvpO) allows H.volcanii to produce gas vesicles. A similar region restores gas vesicle production in H.halobium without the p-vac locus, but it still has the c-vac locus. This Halobacterium salinarum (strain ATCC 700922 / JCM 11081 / NRC-1) (Halobacterium halobium) protein is Protein GvpD1 (gvpD11).